The sequence spans 132 residues: Interleukin-5 (132 aa).

Positions 1-19 (MRMLLHLSILTLACVWTFA) are cleaved as a signal peptide. Residues Asn-45, Asn-74, and Asn-88 are each glycosylated (N-linked (GlcNAc...) asparagine).

It belongs to the IL-5 family. As to quaternary structure, homodimer; disulfide-linked. Interacts with IL5RA. Interacts with CSF2RB.

The protein resides in the secreted. Functionally, homodimeric cytokine expressed predominantly by T-lymphocytes and NK cells that plays an important role in the survival, differentiation, and chemotaxis of eosinophils. Also acts on activated and resting B-cells to induce immunoglobulin production, growth, and differentiation. Mechanistically, exerts its biological effects through a receptor composed of IL5RA subunit and the cytokine receptor common subunit beta/CSF2RB. Binding to the receptor leads to activation of various kinases including LYN, SYK and JAK2 and thereby propagates signals through the RAS-MAPK and JAK-STAT5 pathways respectively. This is Interleukin-5 (IL5) from Sigmodon hispidus (Hispid cotton rat).